The following is a 146-amino-acid chain: Large ribosomal subunit protein uL16c (146 aa).

This sequence belongs to the universal ribosomal protein uL16 family. Part of the 50S ribosomal subunit.

It is found in the plastid. It localises to the chloroplast. The protein is Large ribosomal subunit protein uL16c of Angiopteris evecta (Mule's foot fern).